The sequence spans 708 residues: Elongation factor G (708 aa).

The tr-type G domain occupies 8 to 290 (KRYRNIGISA…AVIQYLPAPM (283 aa)). GTP contacts are provided by residues 17 to 24 (AHIDAGKT), 88 to 92 (DTPGH), and 142 to 145 (NKMD).

The protein belongs to the TRAFAC class translation factor GTPase superfamily. Classic translation factor GTPase family. EF-G/EF-2 subfamily.

Its subcellular location is the cytoplasm. Functionally, catalyzes the GTP-dependent ribosomal translocation step during translation elongation. During this step, the ribosome changes from the pre-translocational (PRE) to the post-translocational (POST) state as the newly formed A-site-bound peptidyl-tRNA and P-site-bound deacylated tRNA move to the P and E sites, respectively. Catalyzes the coordinated movement of the two tRNA molecules, the mRNA and conformational changes in the ribosome. The chain is Elongation factor G from Psychrobacter arcticus (strain DSM 17307 / VKM B-2377 / 273-4).